The chain runs to 417 residues: Serine hydroxymethyltransferase (417 aa).

Residues Leu-121 and 125–127 contribute to the (6S)-5,6,7,8-tetrahydrofolate site; that span reads GHL. Lys-229 carries the N6-(pyridoxal phosphate)lysine modification. 355–357 is a binding site for (6S)-5,6,7,8-tetrahydrofolate; that stretch reads SPF.

It belongs to the SHMT family. In terms of assembly, homodimer. Pyridoxal 5'-phosphate is required as a cofactor.

Its subcellular location is the cytoplasm. It catalyses the reaction (6R)-5,10-methylene-5,6,7,8-tetrahydrofolate + glycine + H2O = (6S)-5,6,7,8-tetrahydrofolate + L-serine. It participates in one-carbon metabolism; tetrahydrofolate interconversion. It functions in the pathway amino-acid biosynthesis; glycine biosynthesis; glycine from L-serine: step 1/1. Functionally, catalyzes the reversible interconversion of serine and glycine with tetrahydrofolate (THF) serving as the one-carbon carrier. This reaction serves as the major source of one-carbon groups required for the biosynthesis of purines, thymidylate, methionine, and other important biomolecules. Also exhibits THF-independent aldolase activity toward beta-hydroxyamino acids, producing glycine and aldehydes, via a retro-aldol mechanism. In Salmonella paratyphi C (strain RKS4594), this protein is Serine hydroxymethyltransferase.